We begin with the raw amino-acid sequence, 431 residues long: Protein translocase subunit SecY (431 aa).

Helical transmembrane passes span 18 to 38, 64 to 84, 116 to 136, 146 to 166, 175 to 195, 214 to 234, 262 to 282, 309 to 329, 369 to 389, and 390 to 410; these read IIFT…PVPH, LFNF…SIII, FTIV…NNMA, VGTY…LMWL, VGNG…PQTI, IIKV…VIFI, LPLK…AFIT, PVGM…YAFV, FVGS…VNIA, and GLPS…GVAL.

The protein belongs to the SecY/SEC61-alpha family. In terms of assembly, component of the Sec protein translocase complex. Heterotrimer consisting of SecY, SecE and SecG subunits. The heterotrimers can form oligomers, although 1 heterotrimer is thought to be able to translocate proteins. Interacts with the ribosome. Interacts with SecDF, and other proteins may be involved. Interacts with SecA.

It is found in the cell membrane. In terms of biological role, the central subunit of the protein translocation channel SecYEG. Consists of two halves formed by TMs 1-5 and 6-10. These two domains form a lateral gate at the front which open onto the bilayer between TMs 2 and 7, and are clamped together by SecE at the back. The channel is closed by both a pore ring composed of hydrophobic SecY resides and a short helix (helix 2A) on the extracellular side of the membrane which forms a plug. The plug probably moves laterally to allow the channel to open. The ring and the pore may move independently. This Bacillus licheniformis (strain ATCC 14580 / DSM 13 / JCM 2505 / CCUG 7422 / NBRC 12200 / NCIMB 9375 / NCTC 10341 / NRRL NRS-1264 / Gibson 46) protein is Protein translocase subunit SecY.